A 118-amino-acid chain; its full sequence is Ig heavy chain V region X24 (118 aa).

Positions 1–111 constitute an Ig-like domain; it reads EVKLLESGGG…GYFDYWGQGT (111 aa).

This Mus musculus (Mouse) protein is Ig heavy chain V region X24.